Reading from the N-terminus, the 188-residue chain is Elongation factor P (188 aa).

The protein belongs to the elongation factor P family.

Its subcellular location is the cytoplasm. It functions in the pathway protein biosynthesis; polypeptide chain elongation. Functionally, involved in peptide bond synthesis. Stimulates efficient translation and peptide-bond synthesis on native or reconstituted 70S ribosomes in vitro. Probably functions indirectly by altering the affinity of the ribosome for aminoacyl-tRNA, thus increasing their reactivity as acceptors for peptidyl transferase. The chain is Elongation factor P from Rhodospirillum centenum (strain ATCC 51521 / SW).